We begin with the raw amino-acid sequence, 730 residues long: Translation factor GUF1 homolog, mitochondrial (730 aa).

In terms of domain architecture, tr-type G spans Glu106–Lys289. Residues Ala115–Ser122, Asp182–His186, and Asn236–Asp239 each bind GTP.

Belongs to the TRAFAC class translation factor GTPase superfamily. Classic translation factor GTPase family. LepA subfamily.

The protein localises to the mitochondrion inner membrane. The enzyme catalyses GTP + H2O = GDP + phosphate + H(+). Its function is as follows. Promotes mitochondrial protein synthesis. May act as a fidelity factor of the translation reaction, by catalyzing a one-codon backward translocation of tRNAs on improperly translocated ribosomes. Binds to mitochondrial ribosomes in a GTP-dependent manner. This is Translation factor GUF1 homolog, mitochondrial from Theileria annulata.